Reading from the N-terminus, the 537-residue chain is ATP synthase subunit beta (537 aa).

The interval 1 to 61 (MAKAATSKKE…SSPQKGGKKG (61 aa)) is disordered. The segment covering 7–18 (SKKEASKVEAKK) has biased composition (basic and acidic residues). A compositionally biased stretch (polar residues) spans 44-55 (NSPSRTGSSSPQ). 209–216 (GGAGVGKT) provides a ligand contact to ATP.

The protein belongs to the ATPase alpha/beta chains family. In terms of assembly, F-type ATPases have 2 components, CF(1) - the catalytic core - and CF(0) - the membrane proton channel. CF(1) has five subunits: alpha(3), beta(3), gamma(1), delta(1), epsilon(1). CF(0) has three main subunits: a(1), b(2) and c(9-12). The alpha and beta chains form an alternating ring which encloses part of the gamma chain. CF(1) is attached to CF(0) by a central stalk formed by the gamma and epsilon chains, while a peripheral stalk is formed by the delta and b chains.

The protein localises to the cell inner membrane. It catalyses the reaction ATP + H2O + 4 H(+)(in) = ADP + phosphate + 5 H(+)(out). In terms of biological role, produces ATP from ADP in the presence of a proton gradient across the membrane. The catalytic sites are hosted primarily by the beta subunits. The chain is ATP synthase subunit beta from Bartonella bacilliformis (strain ATCC 35685 / KC583 / Herrer 020/F12,63).